Consider the following 303-residue polypeptide: D-alanine--D-alanine ligase (303 aa).

Positions threonine 99 to lysine 293 constitute an ATP-grasp domain. Glycine 125–threonine 176 contributes to the ATP binding site. Mg(2+) contacts are provided by aspartate 248, glutamate 260, and asparagine 262.

Belongs to the D-alanine--D-alanine ligase family. The cofactor is Mg(2+). Requires Mn(2+) as cofactor.

The protein localises to the cytoplasm. It catalyses the reaction 2 D-alanine + ATP = D-alanyl-D-alanine + ADP + phosphate + H(+). The protein operates within cell wall biogenesis; peptidoglycan biosynthesis. Its function is as follows. Cell wall formation. This is D-alanine--D-alanine ligase from Thermotoga maritima (strain ATCC 43589 / DSM 3109 / JCM 10099 / NBRC 100826 / MSB8).